Consider the following 589-residue polypeptide: Serine/threonine-protein phosphatase 2A 65 kDa regulatory subunit A alpha isoform (589 aa).

At Ala-2 the chain carries N-acetylalanine. HEAT repeat units follow at residues 8 to 46 (DSLYPIAVLIDELRNEDVQLRLNSIKKLSTIALALGVER), 47 to 84 (TRSELLPFLTDTIYDEDEVLLALAEQLGTFTTLVGGPE), 85 to 123 (YVHCLLPPLESLATVEETVVRDKAVESLRAISHEHSPSD), 124 to 161 (LEAHFVPLVKRLAGGDWFTSRTSACGLFSVCYPRVSSA), 162 to 200 (VKAELRQYFRNLCSDDTPMVRRAAASKLGEFAKVLELDN), 201 to 239 (VKSEIIPMFSNLASDEQDSVRLLAVEACVNIAQLLPQED), 240 to 278 (LEALVMPTLRQAAEDKSWRVRYMVADKFTELQKAVGPEI), 279 to 321 (TKTD…RENV), 322 to 360 (IMTQILPCIKELVSDANQHVKSALASVIMGLSPILGKDN), 361 to 399 (TIEHLLPLFLAQLKDECPEVRLNIISNLDCVNEVIGIRQ), 400 to 438 (LSQSLLPAIVELAEDAKWRVRLAIIEYMPLLAGQLGVEF), 439 to 477 (FDEKLNSLCMAWLVDHVYAIREAATSNLKKLVEKFGKEW), 478 to 516 (AHATIIPKVLAMSGDPNYLHRMTTLFCINVLSEVCGQDI), 517 to 555 (TTKHMLPTVLRMAGDPVANVRFNVAKSLQKIGPILDNST), and 556 to 589 (LQSEVKPILEKLTQDQDVDVKYFAQEALTVLSLA). Lys-280 carries the post-translational modification N6-acetyllysine.

Belongs to the phosphatase 2A regulatory subunit A family. In terms of assembly, PP2A consists of a common heterodimeric core enzyme, composed of PPP2CA a 36 kDa catalytic subunit (subunit C) and PPP2R1A a 65 kDa constant regulatory subunit (PR65 or subunit A), that associates with a variety of regulatory subunits. Proteins that associate with the core dimer include three families of regulatory subunits B (the R2/B/PR55/B55, R3/B''/PR72/PR130/PR59 and R5/B'/B56 families), the 48 kDa variable regulatory subunit, viral proteins, and cell signaling molecules. Found in a complex with at least ARL2, PPP2CB, PPP2R1A, PPP2R2A, PPP2R5E and TBCD. Interacts with the PP2A C catalytic subunit PPP2CA. Interacts with the PP2A B subunit PPP2R2A. Interacts with the PP2A B subunit PPP2R5D. Interacts with FOXO1; the interaction dephosphorylates FOXO1 on AKT-mediated phosphorylation sites. Interacts with IPO9. Interacts with TP53 and SGO1. Interacts with PLA2G16; this interaction might decrease PP2A activity. Interacts with CTTNBP2NL. Interacts with GNA12; the interaction promotes protein phosphatase 2A activation causing dephosphorylation of MAPT. Interacts with CIP2A; this interaction stabilizes CIP2A. Interacts with PABIR1/FAM122A. Interacts with ADCY8; antagonizes interaction between ADCY8 and calmodulin. Interacts with CRTC3 (when phosphorylated at 'Ser-391'). Interacts with SPRY2. Part of the core of STRIPAK complexes composed of PP2A catalytic and scaffolding subunits, the striatins (PP2A regulatory subunits), the striatin-associated proteins MOB4, STRIP1 and STRIP2, PDCD10 and members of the STE20 kinases, such as STK24 and STK26. Component of the Integrator-PP2A (INTAC) complex, composed of the Integrator core complex and protein phosphatase 2A subunits PPP2CA and PPP2R1A.

It localises to the cytoplasm. It is found in the nucleus. Its subcellular location is the chromosome. The protein resides in the centromere. The protein localises to the lateral cell membrane. It localises to the cell projection. It is found in the dendrite. The PR65 subunit of protein phosphatase 2A serves as a scaffolding molecule to coordinate the assembly of the catalytic subunit and a variable regulatory B subunit. Upon interaction with GNA12 promotes dephosphorylation of microtubule associated protein TAU/MAPT. Required for proper chromosome segregation and for centromeric localization of SGO1 in mitosis. Together with RACK1 adapter, mediates dephosphorylation of AKT1 at 'Ser-473', preventing AKT1 activation and AKT-mTOR signaling pathway. Dephosphorylation of AKT1 is essential for regulatory T-cells (Treg) homeostasis and stability. Part of the striatin-interacting phosphatase and kinase (STRIPAK) complexes. STRIPAK complexes have critical roles in protein (de)phosphorylation and are regulators of multiple signaling pathways including Hippo, MAPK, nuclear receptor and cytoskeleton remodeling. Different types of STRIPAK complexes are involved in a variety of biological processes such as cell growth, differentiation, apoptosis, metabolism and immune regulation. Key mediator of a quality checkpoint during transcription elongation as part of the Integrator-PP2A (INTAC) complex. The INTAC complex drives premature transcription termination of transcripts that are unfavorably configured for transcriptional elongation: within the INTAC complex, acts as a scaffolding subunit for PPP2CA, which catalyzes dephosphorylation of the C-terminal domain (CTD) of Pol II subunit POLR2A/RPB1 and SUPT5H/SPT5, thereby preventing transcriptional elongation. Regulates the recruitment of the SKA complex to kinetochores. In Mus musculus (Mouse), this protein is Serine/threonine-protein phosphatase 2A 65 kDa regulatory subunit A alpha isoform (Ppp2r1a).